Consider the following 87-residue polypeptide: Phosphoribosyl-ATP pyrophosphatase (87 aa).

Belongs to the PRA-PH family.

Its subcellular location is the cytoplasm. It catalyses the reaction 1-(5-phospho-beta-D-ribosyl)-ATP + H2O = 1-(5-phospho-beta-D-ribosyl)-5'-AMP + diphosphate + H(+). Its pathway is amino-acid biosynthesis; L-histidine biosynthesis; L-histidine from 5-phospho-alpha-D-ribose 1-diphosphate: step 2/9. The chain is Phosphoribosyl-ATP pyrophosphatase from Salinibacter ruber (strain DSM 13855 / M31).